The primary structure comprises 101 residues: UPF0213 protein lp_2058 (101 aa).

The GIY-YIG domain maps to 15–92 (KKYYFYVLLC…KHQSRAAKLK (78 aa)).

Belongs to the UPF0213 family.

The polypeptide is UPF0213 protein lp_2058 (Lactiplantibacillus plantarum (strain ATCC BAA-793 / NCIMB 8826 / WCFS1) (Lactobacillus plantarum)).